A 385-amino-acid chain; its full sequence is Probable thioesterase PNKD (385 aa).

Polar residues predominate over residues 32-42 (KASQNRTRALQ). Residues 32 to 56 (KASQNRTRALQSHSSPECKEEPEPL) are disordered. Val121 is modified (phosphoserine). Zn(2+) is bound by residues His172, His174, Asp176, His177, His229, Asp253, and His291.

This sequence belongs to the metallo-beta-lactamase superfamily. Glyoxalase II family. In terms of assembly, isoform 2 interacts with the sarcomeric proteins, MRLC2, MYOM1 and ENO3. Requires Zn(2+) as cofactor. In terms of processing, undergoes cleavage at the N-terminus. As to expression, expressed in many discrete areas of the brain.

The protein localises to the cell membrane. Its subcellular location is the mitochondrion. It is found in the cytoplasm. It catalyses the reaction a thioester + H2O = a thiol + a carboxylate + H(+). In terms of biological role, probable thioesterase that may play a role in cellular detoxification processes; it likely acts on a yet-unknown alpha-hydroxythioester substrate. In vitro, it is able to catalyze the hydrolysis of S-D-lactoyl-glutathione to form glutathione and D-lactic acid at very low rate, though this reaction is not physiologically relevant in vivo. This Mus musculus (Mouse) protein is Probable thioesterase PNKD (Pnkd).